Here is a 540-residue protein sequence, read N- to C-terminus: Bifunctional ribokinase/ribose-5-phosphate isomerase A (540 aa).

A ribokinase region spans residues 1-308 (MKKIIVVGST…AILNVINQDQ (308 aa)). Residues 11 to 13 (NVD), 39 to 44 (GGKGAN), and Glu-141 each bind substrate. Residues Asn-185 and 221-226 (TVGGRG) each bind ATP. K(+)-binding residues include Asp-247 and Thr-249. 252 to 253 (GD) lines the ATP pocket. Substrate is bound at residue Asp-253. Asp-253 acts as the Proton acceptor; for ribokinase activity in catalysis. 4 residues coordinate K(+): Thr-284, Val-287, Gly-289, and Ser-293. Residues 309–540 (MTKTEIEKQK…IKTIKRSDLS (232 aa)) are ribose-5-phosphate isomerase A. Substrate is bound by residues 339–342 (SGTT), 395–398 (DGAD), and 408–411 (KGGG). The active-site Proton acceptor; for ribose-5-phosphate isomerase activity is the Glu-417. Position 435 (Lys-435) interacts with substrate.

The protein in the N-terminal section; belongs to the carbohydrate kinase PfkB family. Ribokinase subfamily. In the C-terminal section; belongs to the ribose 5-phosphate isomerase family. Requires Mg(2+) as cofactor.

It is found in the cytoplasm. It catalyses the reaction D-ribose + ATP = D-ribose 5-phosphate + ADP + H(+). It carries out the reaction aldehydo-D-ribose 5-phosphate = D-ribulose 5-phosphate. Its pathway is carbohydrate metabolism; D-ribose degradation; D-ribose 5-phosphate from beta-D-ribopyranose: step 2/2. The protein operates within carbohydrate degradation; pentose phosphate pathway; D-ribose 5-phosphate from D-ribulose 5-phosphate (non-oxidative stage): step 1/1. With respect to regulation, activated by a monovalent cation that binds near, but not in, the active site. The most likely occupant of the site in vivo is potassium. Also activated by ammonium ion. Ion binding induces a conformational change that may alter substrate affinity. Functionally, bifunctional enzyme that catalyzes the phosphorylation of ribose at O-5 in a reaction requiring ATP and magnesium, and the reversible conversion of ribose 5-phosphate to ribulose 5-phosphate. The protein is Bifunctional ribokinase/ribose-5-phosphate isomerase A (rbsK/rbiA) of Fructilactobacillus sanfranciscensis (strain ATCC 27651 / DSM 20451 / JCM 5668 / CCUG 30143 / KCTC 3205 / NCIMB 702811 / NRRL B-3934 / L-12) (Lactobacillus sanfranciscensis).